Here is a 258-residue protein sequence, read N- to C-terminus: Venom plasminogen activator TSV-PA (258 aa).

The first 18 residues, 1–18 (MELIRVLANLLILQLSYA), serve as a signal peptide directing secretion. Positions 19–24 (QKSSEL) are excised as a propeptide. The Peptidase S1 domain maps to 25–249 (VFGGDECNIN…YLDWIKSIIA (225 aa)). 6 cysteine pairs are disulfide-bonded: C31-C163, C50-C66, C98-C256, C142-C210, C174-C189, and C200-C225. Active-site charge relay system residues include H65 and D110. The N-linked (GlcNAc...) asparagine glycan is linked to N185. Catalysis depends on S204, which acts as the Charge relay system.

Belongs to the peptidase S1 family. Snake venom subfamily. Monomer. Expressed by the venom gland.

Its subcellular location is the secreted. In terms of biological role, snake venom serine protease that activates plasminogen. In Trimeresurus stejnegeri (Chinese green tree viper), this protein is Venom plasminogen activator TSV-PA.